The primary structure comprises 108 residues: uncharacterized protein (108 aa).

This is an uncharacterized protein from Autographa californica nuclear polyhedrosis virus (AcMNPV).